Consider the following 46-residue polypeptide: Phoratoxin (46 aa).

3 cysteine pairs are disulfide-bonded: Cys3–Cys40, Cys4–Cys32, and Cys16–Cys26. Position 46 is a blocked carboxyl end (His) (His46).

This sequence belongs to the plant thionin (TC 1.C.44) family.

It localises to the secreted. Its function is as follows. Thionins are small plant proteins which are toxic to animal cells. They seem to exert their toxic effect at the level of the cell membrane. Their precise function is not known. The protein is Phoratoxin of Phoradendron leucarpum subsp. tomentosum (California mistletoe).